The primary structure comprises 128 residues: Saitohin (128 aa).

A disordered region spans residues 77–128 (SYSSEESSRNGAEQGRQLSIEGPFQGQNCPSHPAAALPLPMRGESQATSCQV).

In terms of assembly, interacts with PRDX6.

The protein resides in the cytoplasm. Its subcellular location is the nucleus. This chain is Saitohin (STH), found in Gorilla gorilla gorilla (Western lowland gorilla).